The primary structure comprises 146 residues: Anti-sigma F factor (146 aa).

Belongs to the anti-sigma-factor family.

The catalysed reaction is L-seryl-[protein] + ATP = O-phospho-L-seryl-[protein] + ADP + H(+). It carries out the reaction L-threonyl-[protein] + ATP = O-phospho-L-threonyl-[protein] + ADP + H(+). Its function is as follows. Binds to sigma F and blocks its ability to form an RNA polymerase holoenzyme (E-sigma F). Phosphorylates SpoIIAA on a serine residue. This phosphorylation may enable SpoIIAA to act as an anti-anti-sigma factor that counteracts SpoIIAB and thus releases sigma F from inhibition. The chain is Anti-sigma F factor from Geobacillus kaustophilus (strain HTA426).